The sequence spans 465 residues: Glutamate--tRNA ligase (465 aa).

The 'HIGH' region signature appears at 5 to 15 (PSPTGMFHVGG). Zn(2+) contacts are provided by Cys96, Cys98, Cys118, and Asp120. The 'KMSKS' region signature appears at 228–232 (KLSKR). Lys231 is an ATP binding site.

Belongs to the class-I aminoacyl-tRNA synthetase family. Glutamate--tRNA ligase type 1 subfamily. In terms of assembly, monomer. Zn(2+) is required as a cofactor.

The protein localises to the cytoplasm. It catalyses the reaction tRNA(Glu) + L-glutamate + ATP = L-glutamyl-tRNA(Glu) + AMP + diphosphate. Catalyzes the attachment of glutamate to tRNA(Glu) in a two-step reaction: glutamate is first activated by ATP to form Glu-AMP and then transferred to the acceptor end of tRNA(Glu). The protein is Glutamate--tRNA ligase of Salinispora tropica (strain ATCC BAA-916 / DSM 44818 / JCM 13857 / NBRC 105044 / CNB-440).